The sequence spans 296 residues: GTP cyclohydrolase FolE2 (296 aa).

This sequence belongs to the GTP cyclohydrolase IV family.

The enzyme catalyses GTP + H2O = 7,8-dihydroneopterin 3'-triphosphate + formate + H(+). The protein operates within cofactor biosynthesis; 7,8-dihydroneopterin triphosphate biosynthesis; 7,8-dihydroneopterin triphosphate from GTP: step 1/1. Its function is as follows. Converts GTP to 7,8-dihydroneopterin triphosphate. The polypeptide is GTP cyclohydrolase FolE2 (Ectopseudomonas mendocina (strain ymp) (Pseudomonas mendocina)).